Here is a 93-residue protein sequence, read N- to C-terminus: DNA-directed RNA polymerase subunit omega (93 aa).

The protein belongs to the RNA polymerase subunit omega family. In terms of assembly, the RNAP catalytic core consists of 2 alpha, 1 beta, 1 beta' and 1 omega subunit. When a sigma factor is associated with the core the holoenzyme is formed, which can initiate transcription.

The catalysed reaction is RNA(n) + a ribonucleoside 5'-triphosphate = RNA(n+1) + diphosphate. Functionally, promotes RNA polymerase assembly. Latches the N- and C-terminal regions of the beta' subunit thereby facilitating its interaction with the beta and alpha subunits. The polypeptide is DNA-directed RNA polymerase subunit omega (Corynebacterium urealyticum (strain ATCC 43042 / DSM 7109)).